The chain runs to 124 residues: CD59 glycoprotein (124 aa).

The first 24 residues, 1–24 (MTSRGVHLLLRLLFLLAVFYSSDS), serve as a signal peptide directing secretion. A UPAR/Ly6 domain is found at 25 to 101 (SLMCYHCLLP…DLCNGPEDDG (77 aa)). Cystine bridges form between Cys28-Cys51, Cys31-Cys38, Cys44-Cys64, Cys70-Cys88, and Cys89-Cys94. N-linked (GlcNAc...) asparagine glycosylation is present at Asn37. Residue Gly101 is the site of GPI-anchor amidated glycine attachment. A propeptide spans 102 to 124 (TALTGRTVLLVAPLLAAARNLCL) (removed in mature form).

In terms of assembly, interacts with T-cell surface antigen CD2. N- and O-glycosylated.

The protein localises to the cell membrane. It is found in the secreted. Functionally, potent inhibitor of the complement membrane attack complex (MAC) action, which protects self-cells from damage during complement activation. Acts by binding to the beta-haipins of C8 (C8A and C8B) components of the assembling MAC, forming an intermolecular beta-sheet that prevents incorporation of the multiple copies of C9 required for complete formation of the osmolytic pore. The chain is CD59 glycoprotein from Oryctolagus cuniculus (Rabbit).